The primary structure comprises 148 residues: Lysozyme-like protein 6 (148 aa).

Positions 1–19 (MTKALLIYLVSSFLALNQA) are cleaved as a signal peptide. Positions 20-148 (SLISRCDLAQ…FYWLTGCRLR (129 aa)) constitute a C-type lysozyme domain. Cystine bridges form between Cys25-Cys145, Cys49-Cys133, Cys83-Cys98, and Cys94-Cys112. Catalysis depends on residues Glu54 and Asp71.

The protein belongs to the glycosyl hydrolase 22 family. Monomer. In terms of tissue distribution, expressed in testis, epididymis and spermatozoa (at protein level). Expressed in late-stage spermatocytes and round spermatids.

The protein resides in the secreted. It localises to the cell surface. Its subcellular location is the cell projection. The protein localises to the cilium. It is found in the flagellum. The catalysed reaction is Hydrolysis of (1-&gt;4)-beta-linkages between N-acetylmuramic acid and N-acetyl-D-glucosamine residues in a peptidoglycan and between N-acetyl-D-glucosamine residues in chitodextrins.. Functionally, may be involved sperm-egg plasma membrane adhesion and fusion during fertilization. Exhibits bacteriolytic activity in vitro against Micrococcus luteus and Staphylococcus aureus. Shows weak bacteriolytic activity against Gram-positive bacteria at physiological pH. Bacteriolytic activity is pH-dependent, with a maximum at around pH 5.6. The chain is Lysozyme-like protein 6 (LYZL6) from Homo sapiens (Human).